Here is a 193-residue protein sequence, read N- to C-terminus: Peptidyl-tRNA hydrolase (193 aa).

His-17 is a binding site for tRNA. His-22 acts as the Proton acceptor in catalysis. TRNA is bound by residues Phe-68, Asn-70, and Asn-116.

Belongs to the PTH family. As to quaternary structure, monomer.

It localises to the cytoplasm. The catalysed reaction is an N-acyl-L-alpha-aminoacyl-tRNA + H2O = an N-acyl-L-amino acid + a tRNA + H(+). Hydrolyzes ribosome-free peptidyl-tRNAs (with 1 or more amino acids incorporated), which drop off the ribosome during protein synthesis, or as a result of ribosome stalling. Functionally, catalyzes the release of premature peptidyl moieties from peptidyl-tRNA molecules trapped in stalled 50S ribosomal subunits, and thus maintains levels of free tRNAs and 50S ribosomes. This Xanthomonas campestris pv. campestris (strain ATCC 33913 / DSM 3586 / NCPPB 528 / LMG 568 / P 25) protein is Peptidyl-tRNA hydrolase.